The following is a 185-amino-acid chain: Biogenesis of lysosome-related organelles complex 1 subunit 5 (185 aa).

Polar residues predominate over residues 1-16 (MSSSNSPVKSTGSPFI). The segment at 1–24 (MSSSNSPVKSTGSPFIQSLKPRDN) is disordered. Positions 98–182 (MQDQLASVLK…VTMEKELSKQ (85 aa)) form a coiled coil.

The protein belongs to the BLOC1S5 family. Component of the biogenesis of lysosome-related organelles complex 1 (BLOC-1).

In terms of biological role, component of the BLOC-1 complex, a complex that is required for normal biogenesis of lysosome-related organelles (LRO), such as platelet dense granules and melanosomes. Plays a role in intracellular vesicle trafficking. This is Biogenesis of lysosome-related organelles complex 1 subunit 5 (bloc1s5) from Xenopus tropicalis (Western clawed frog).